The chain runs to 727 residues: Elongation factor 2 (727 aa).

The region spanning 19 to 260 is the tr-type G domain; sequence EQIRNMGICA…MSIKHLPNPL (242 aa). GTP is bound by residues 28–35, 94–98, and 148–151; these read AHIDHGKT, DTPGH, and NKVD. Residue His-603 is modified to Diphthamide.

It belongs to the TRAFAC class translation factor GTPase superfamily. Classic translation factor GTPase family. EF-G/EF-2 subfamily.

The protein localises to the cytoplasm. Functionally, catalyzes the GTP-dependent ribosomal translocation step during translation elongation. During this step, the ribosome changes from the pre-translocational (PRE) to the post-translocational (POST) state as the newly formed A-site-bound peptidyl-tRNA and P-site-bound deacylated tRNA move to the P and E sites, respectively. Catalyzes the coordinated movement of the two tRNA molecules, the mRNA and conformational changes in the ribosome. In Methanococcus maripaludis (strain DSM 14266 / JCM 13030 / NBRC 101832 / S2 / LL), this protein is Elongation factor 2.